Consider the following 100-residue polypeptide: Esterase PE11 (100 aa).

One can recognise a PE domain in the interval 4–94 (VTTRPDSIGE…TSYWLTELAN (91 aa)).

It belongs to the mycobacterial PE family.

The protein localises to the secreted. It localises to the cell wall. It catalyses the reaction an acetyl ester + H2O = an aliphatic alcohol + acetate + H(+). The enzyme catalyses a butanoate ester + H2O = an aliphatic alcohol + butanoate + H(+). The catalysed reaction is an octanoate ester + H2O = an aliphatic alcohol + octanoate + H(+). In terms of biological role, involved in cell wall lipids remodeling and in virulence. Restricts the biofilm growth and is essential for the optimal intracellular survival of M.tuberculosis. Shows esterase activity with a preference for short-chain esters, particularly pNP-acetate (C2) and pNP-butyrate (C4). Has weaker activity with pNP-octanoate (C8), pNP-laurate (C12) and pNP-myristate (C14). Shows weak long-chain triacylglycerol (TAG) hydrolase activity in vitro. Not necessary for PPE17 stability or for its localization on the mycobacterial surface. The chain is Esterase PE11 from Mycobacterium tuberculosis (strain ATCC 25618 / H37Rv).